The sequence spans 475 residues: Glycogen synthase (475 aa).

An ADP-alpha-D-glucose-binding site is contributed by K15.

It belongs to the glycosyltransferase 1 family. Bacterial/plant glycogen synthase subfamily.

The catalysed reaction is [(1-&gt;4)-alpha-D-glucosyl](n) + ADP-alpha-D-glucose = [(1-&gt;4)-alpha-D-glucosyl](n+1) + ADP + H(+). It participates in glycan biosynthesis; glycogen biosynthesis. Functionally, synthesizes alpha-1,4-glucan chains using ADP-glucose. The protein is Glycogen synthase of Anaeromyxobacter sp. (strain Fw109-5).